The sequence spans 399 residues: DNA replication and repair protein RecF (399 aa).

30–37 (GSNGIGKT) contacts ATP.

This sequence belongs to the RecF family.

Its subcellular location is the cytoplasm. In terms of biological role, the RecF protein is involved in DNA metabolism; it is required for DNA replication and normal SOS inducibility. RecF binds preferentially to single-stranded, linear DNA. It also seems to bind ATP. In Paenarthrobacter aurescens (strain TC1), this protein is DNA replication and repair protein RecF.